The sequence spans 465 residues: Ras-like GTPase YcjX (465 aa).

Residues 26 to 33 carry the Walker A motif motif; the sequence is GLSRSGKT. GTP-binding residues include serine 28, glycine 31, lysine 32, threonine 33, alanine 34, tryptophan 95, threonine 99, and arginine 100. The GDP site is built by glycine 31, lysine 32, threonine 33, alanine 34, tryptophan 95, and threonine 99. Lysine 249 carries the N6-acetyllysine modification. Lysine 338, aspartate 340, histidine 341, and valine 380 together coordinate GTP. 4 residues coordinate GDP: lysine 338, aspartate 340, histidine 341, and valine 380.

This sequence to H.influenzae HI_1637. In terms of assembly, monomer in solution. Requires Mg(2+) as cofactor.

The enzyme catalyses GTP + H2O = GDP + phosphate + H(+). With respect to regulation, alternates between an inactive form bound to GDP and an active form bound to GTP. Likely activated by a guanine nucleotide-exchange factor (GEF). Its function is as follows. Binds GTP and GDP. Has intrinsic GTPase activity. Does not hydrolyze ATP. May act as a transducer of stress responses. This Escherichia coli (strain K12) protein is Ras-like GTPase YcjX (ycjX).